We begin with the raw amino-acid sequence, 535 residues long: Bifunctional purine biosynthesis protein PurH (535 aa).

Residues 6-151 (TRLPVRRALI…KNHKDVAIVV (146 aa)) enclose the MGS-like domain.

This sequence belongs to the PurH family.

It catalyses the reaction (6R)-10-formyltetrahydrofolate + 5-amino-1-(5-phospho-beta-D-ribosyl)imidazole-4-carboxamide = 5-formamido-1-(5-phospho-D-ribosyl)imidazole-4-carboxamide + (6S)-5,6,7,8-tetrahydrofolate. It carries out the reaction IMP + H2O = 5-formamido-1-(5-phospho-D-ribosyl)imidazole-4-carboxamide. Its pathway is purine metabolism; IMP biosynthesis via de novo pathway; 5-formamido-1-(5-phospho-D-ribosyl)imidazole-4-carboxamide from 5-amino-1-(5-phospho-D-ribosyl)imidazole-4-carboxamide (10-formyl THF route): step 1/1. The protein operates within purine metabolism; IMP biosynthesis via de novo pathway; IMP from 5-formamido-1-(5-phospho-D-ribosyl)imidazole-4-carboxamide: step 1/1. The sequence is that of Bifunctional purine biosynthesis protein PurH from Pseudomonas putida (strain GB-1).